The following is a 401-amino-acid chain: Multidrug resistance protein MdtH (401 aa).

11 consecutive transmembrane segments (helical) span residues 13–33 (YFLI…FPLI), 34–54 (SIHF…ALGL), 88–108 (IGFI…ACIL), 139–159 (ILML…SWLL), 164–184 (FQLV…FNAW), 211–231 (FIIY…VMLM), 248–268 (YIYI…TYWM), 275–295 (ETRL…IGSV), 298–318 (LYEL…AEPA), 341–361 (LSLA…YDLG), and 366–386 (FYQL…LILY).

The protein belongs to the major facilitator superfamily. DHA1 family. MdtH (TC 2.A.1.2.21) subfamily.

It localises to the cell inner membrane. The sequence is that of Multidrug resistance protein MdtH from Blochmanniella floridana.